A 77-amino-acid polypeptide reads, in one-letter code: Metallocarboxypeptidase inhibitor (77 aa).

An N-terminal signal peptide occupies residues 1–32 (MAQKFTILFTILLVVIAAQDVMAQDATLTKLF). Gln33 bears the Pyrrolidone carboxylic acid mark. Disulfide bonds link Cys39/Cys55, Cys43/Cys58, and Cys49/Cys65. Positions 70–77 (GRAMAIGV) are cleaved as a propeptide — hydrophobic peptide.

To potato MCPI. In terms of tissue distribution, ovaries.

Its function is as follows. May play a defensive role against insect attacks. The polypeptide is Metallocarboxypeptidase inhibitor (Solanum lycopersicum (Tomato)).